We begin with the raw amino-acid sequence, 1925 residues long: Diacylglycerol kinase eta (1925 aa).

Positions 82-175 constitute a PH domain; the sequence is AIIREGYLMK…WLGSLKTATA (94 aa). 2 consecutive Phorbol-ester/DAG-type zinc fingers follow at residues 195-245 and 268-319; these read HHHW…IANC and PHQW…PIVC. A DAGKc domain is found at 350–486; it reads GNFSPLLVFV…DRWSIMVFEK (137 aa). 8 disordered regions span residues 620 to 641, 783 to 805, 847 to 872, 1013 to 1065, 1113 to 1141, 1167 to 1234, 1256 to 1276, and 1385 to 1405; these read EKDNINSKERRNSRSLRSSEKE, ANIDDAGNRLSPSSEAGENTPTE, DKERTASGQVESEKEEADVNEKSEPQ, TTLC…NPQQ, DRNSGDNHNDNGKNEEADTPTNSAPTRTY, NTTT…SSAS, IRRHSSHAPSLAVRDYDKDKD, and FSAGDKDEKPGKDKERTPTEE. Over residues 792-802 the composition is skewed to polar residues; the sequence is LSPSSEAGENT. Positions 863–872 are enriched in basic and acidic residues; that stretch reads ADVNEKSEPQ. Over residues 1115–1128 the composition is skewed to basic and acidic residues; sequence NSGDNHNDNGKNEE. The span at 1167 to 1187 shows a compositional bias: low complexity; that stretch reads NTTTSTSSSISTTTTTSTTST. The span at 1386–1405 shows a compositional bias: basic and acidic residues; sequence SAGDKDEKPGKDKERTPTEE. An SAM domain is found at 1862–1925; that stretch reads WSVNEVVTWL…LQAIKDLSEN (64 aa).

The protein belongs to the eukaryotic diacylglycerol kinase family.

The protein localises to the cytoplasm. It catalyses the reaction a 1,2-diacyl-sn-glycerol + ATP = a 1,2-diacyl-sn-glycero-3-phosphate + ADP + H(+). Phosphorylates diacylglycerol (DAG) to generate phosphatidic acid (PA). In Drosophila mojavensis (Fruit fly), this protein is Diacylglycerol kinase eta.